Here is an 851-residue protein sequence, read N- to C-terminus: MAKTNISPGMQQYLDIKKDYPDAFLLFRMGDFYELFYEDAVKAAQLLEIGLTSRNKNAENPIPMAGVPHHSAQQYIDVLIELGYKVAVAEQMEDPKQAVGVVKREVVQVITPGTVVDSAKPDSANNFLVAVDFDGCRYGLAYMDVSTGEFCVTDLADFTSVRSEIQNLKAKEVLLGFDLSEEEQTILVKQMNLLLSYEETVYEDKSLIDGQLTTVELTAAGKLLQYVHKTQMRELSHLQALVHYEIKDYLQMSYATKSSLDLVENARTNKKHGSLYWLLDETKTAMGMRLLRSWIDRPLVSKEAILERQEIIQVFLNAFIERTDLSNSLKGVYDIERLSSRVSFGKANPKDLLQLGHTLAQVPYIKAILESFDSPCVDKLVNDIDSLPELEYLIRTAIDPDAPATISEGSIIRNGFDERLDHYRKVMREGTGWIADIEAKERQASGINNLKIDYNKKDGYYFHVTNSNLSLVPEHFFRKATLKNSERYGTAELAKIEGQMLEAREESSSLEYDIFMCIRAQVETYINRLQKLAKILATVDVLQSLAVVAETNHYIRPQFNDNHVITIQEGRHAVVEKVMGVQEYIPNSISFDQQTSIQLITGPNMSGKSTYMRQLALTVIMAQMGSFVAADHVDLPLFDAIFTRIGAADDLISGQSTFMVEMMEANQAIKRASDNSLILFDELGRGTATYDGMALAQAIIEYIHDRVGAKTIFATHYHELTDLSTKLTSLVNVHVATLEKDGDVTFLHKIAEGPADKSYGIHVAKIAGLPKSLLKRADEVLTRLETQSRSTEIISVPSQVESSSAVRQGQLSLFGDEEKTHEIRQALEAIDVMNMTPLQAMTTLYELKKLL.

602–609 serves as a coordination point for ATP; the sequence is GPNMSGKS.

Belongs to the DNA mismatch repair MutS family.

Its function is as follows. This protein is involved in the repair of mismatches in DNA. It is possible that it carries out the mismatch recognition step. This protein has a weak ATPase activity. This chain is DNA mismatch repair protein MutS, found in Streptococcus pyogenes serotype M3 (strain SSI-1).